The primary structure comprises 37 residues: Cellular retinoic acid-binding protein 2 (37 aa).

The short motif at 21–31 (KALGVNMMLRK) is the Nuclear localization signal element.

The protein belongs to the calycin superfamily. Fatty-acid binding protein (FABP) family. Embryo.

It is found in the cytoplasm. The protein localises to the endoplasmic reticulum. The protein resides in the nucleus. Transports retinoic acid to the nucleus. Regulates the access of retinoic acid to the nuclear retinoic acid receptors. This is Cellular retinoic acid-binding protein 2 (CRABP2) from Gallus gallus (Chicken).